The chain runs to 111 residues: Prostatic steroid-binding protein C1 (111 aa).

The first 23 residues, M1–A23, serve as a signal peptide directing secretion.

It belongs to the secretoglobin family. Lipophilin subfamily. In terms of assembly, prostatein is composed of three different peptides called C1, C2 and C3. These form covalent C1:C3 (F) and C2:C3 (S) heterodimers whose noncovalent association forms tetrameric (C1:C3/C3:C2) prostatein molecules.

It localises to the secreted. In terms of biological role, part of prostatein which is the major secretory glycoprotein of ventral prostate gland. The polypeptide is Prostatic steroid-binding protein C1 (Psbpc1) (Rattus norvegicus (Rat)).